The primary structure comprises 160 residues: MPAPILPLIEAAAHWPARGALLGLDLGTKTIGVAVSDPDRKLATGIETVARTAFTADAKRVLALAAERSACGFVLGLPLNMDGSEGPRAQSTRAFARNFARLTELPIGLWDERLSTAAVERALIANDVSRAKRAKIIDEHAAIYILQGALDRLVALNRAG.

Belongs to the YqgF nuclease family.

It localises to the cytoplasm. Could be a nuclease involved in processing of the 5'-end of pre-16S rRNA. This Rhodopseudomonas palustris (strain BisB5) protein is Putative pre-16S rRNA nuclease.